The primary structure comprises 702 residues: MLSGWSVLKGGNMKYWDKALLSLFMCVSTLSIAATHAVAMEGMQMTKEAREIIAHPKGTKESRGVISLQDYIVEEQAMYDWLFKNHPIFTKYGGKTVGKLVVKDRGEEWIEEGRGNDFSKASKRSGGEGFSSMMYRVARNSTLQYPNKFIGPEKCGECHPAQYETWSRSRHATTIRFPGEHPEVNNKLNDPVFDKDTASILPQGITPDVVYCTVGHIRTKFGFFDAWLLRGTYHVEGGLLKNGTGQIVAGGNQWQRTWALNLSPEVAKKIKKWVPDFPVTLEEYGDNGGYVRGLASYAAKYKKSMSFQASTSYCEVCHPWKFDFKNESEFYAALGNAKELQKHTISKGVSCEECHGAGGHLEGGSGLLISNCERCHQRFSYSPDLMRNNPLNAGKPDLALSSKFKSMGPGCGSEGSQTYFTAHYEKGMRCATCHDPHDVTGNVTGEKGIKGVSYNSEQGYLSSLYSKPKLKKECTDCHKEQAYIQSKADTHSKNSCASCHMPFMMSCENFYAIQFQDQAGFDTQRRAHIWKIDVDPARKSLVAGSTSKDPRDGKDWHFERNEEGRNFVDLMWACARTTWADKDQAEAKGCHSPVVSELKETLHFKDQKQVYNEVMGWQTPVKDKFTQVKVGIQGLYSLLEVKKLAPSDKTRVYELIEKAQDTVDLIEKDGSWGMHGFKYTKQRLDAAVEYINEAQRIMKKSL.

The N-terminal stretch at 1–39 (MLSGWSVLKGGNMKYWDKALLSLFMCVSTLSIAATHAVA) is a signal peptide. Residues Cys-155, Cys-158, His-159, and His-171 each coordinate heme c. 2 residues coordinate substrate: Lys-220 and Tyr-297. Cys-314, Cys-317, His-318, Cys-351, Cys-354, His-355, His-360, Cys-372, Cys-375, and His-376 together coordinate heme c. Arg-378 is a substrate binding site. Cys-411 serves as a coordination point for Cu(+). Heme c-binding residues include His-423, Cys-430, Cys-433, His-434, His-437, Cys-474, Cys-477, His-478, His-491, Cys-496, Cys-499, and His-500. Cys-507 lines the Cu(+) pocket. Heme c is bound by residues His-528, Cys-574, Cys-590, His-591, and His-675.

This sequence belongs to the multiheme cytochrome c family. Homotrimer. It depends on Cu(+) as a cofactor. Requires heme c as cofactor.

The protein localises to the periplasm. It carries out the reaction [protein]-disulfide + hydrogen sulfide + 2 A + 3 H2O = [protein]-dithiol + sulfite + 2 AH2 + H(+). Its pathway is sulfur metabolism; sulfite reduction. Its function is as follows. Respiratory sulfite reductase that catalyzes the reduction of sulfite to sulfide in a single step, consuming six electrons in the process. Required for sulfite respiration under anaerobic growth conditions. Has only marginal activity with nitrite. The polypeptide is Dissimilatory sulfite reductase MccA (Wolinella succinogenes (strain ATCC 29543 / DSM 1740 / CCUG 13145 / JCM 31913 / LMG 7466 / NCTC 11488 / FDC 602W) (Vibrio succinogenes)).